The primary structure comprises 204 residues: Cardiotrophin-2 (204 aa).

The signal sequence occupies residues 1–22 (MYCLLATPLCLLSLLLPPLSPA). N-linked (GlcNAc...) asparagine glycosylation occurs at Asn44.

This sequence belongs to the IL-6 superfamily. Binds to tripartite CNTF receptor complex consisting of CNTF alpha chain, LIFR and IL6ST (in vitro). Not detected in adult tissues.

It is found in the secreted. Functionally, increases the platelet count associated with splenomegaly. May have an important role in neuronal precursor development and maturation. This chain is Cardiotrophin-2 (Ctf2), found in Mus musculus (Mouse).